The sequence spans 409 residues: tRNA(Met) cytidine acetate ligase (409 aa).

ATP contacts are provided by residues 7–20 (VVEYNPMHNGHLYH), Gly102, Asn169, and Arg194.

It belongs to the TmcAL family.

It localises to the cytoplasm. It catalyses the reaction cytidine(34) in elongator tRNA(Met) + acetate + ATP = N(4)-acetylcytidine(34) in elongator tRNA(Met) + AMP + diphosphate. Functionally, catalyzes the formation of N(4)-acetylcytidine (ac(4)C) at the wobble position of elongator tRNA(Met), using acetate and ATP as substrates. First activates an acetate ion to form acetyladenylate (Ac-AMP) and then transfers the acetyl group to tRNA to form ac(4)C34. The protein is tRNA(Met) cytidine acetate ligase of Clostridium botulinum (strain Langeland / NCTC 10281 / Type F).